The sequence spans 234 residues: Glucosamine-6-phosphate deaminase (234 aa).

Asp62 serves as the catalytic Proton acceptor; for enolization step. Asn128 acts as the For ring-opening step in catalysis. His130 functions as the Proton acceptor; for ring-opening step in the catalytic mechanism. The active-site For ring-opening step is the Glu135.

The protein belongs to the glucosamine/galactosamine-6-phosphate isomerase family. NagB subfamily.

It catalyses the reaction alpha-D-glucosamine 6-phosphate + H2O = beta-D-fructose 6-phosphate + NH4(+). Its pathway is amino-sugar metabolism; N-acetylneuraminate degradation; D-fructose 6-phosphate from N-acetylneuraminate: step 5/5. In terms of biological role, catalyzes the reversible isomerization-deamination of glucosamine 6-phosphate (GlcN6P) to form fructose 6-phosphate (Fru6P) and ammonium ion. The polypeptide is Glucosamine-6-phosphate deaminase (Streptococcus equi subsp. zooepidemicus (strain H70)).